A 570-amino-acid chain; its full sequence is Methionine--tRNA ligase (570 aa).

The short motif at 14–24 (PYINGIKHLGN) is the 'HIGH' region element. The Zn(2+) site is built by C146, C149, C159, and C162. The 'KMSKS' region motif lies at 347 to 351 (QFSTS). T350 provides a ligand contact to ATP.

Belongs to the class-I aminoacyl-tRNA synthetase family. MetG type 1 subfamily. In terms of assembly, monomer. The cofactor is Zn(2+).

Its subcellular location is the cytoplasm. The enzyme catalyses tRNA(Met) + L-methionine + ATP = L-methionyl-tRNA(Met) + AMP + diphosphate. Its function is as follows. Is required not only for elongation of protein synthesis but also for the initiation of all mRNA translation through initiator tRNA(fMet) aminoacylation. This chain is Methionine--tRNA ligase, found in Jannaschia sp. (strain CCS1).